The chain runs to 111 residues: UPF0145 protein BRADO6695 (111 aa).

This sequence belongs to the UPF0145 family.

The polypeptide is UPF0145 protein BRADO6695 (Bradyrhizobium sp. (strain ORS 278)).